The primary structure comprises 428 residues: Protein clpf-1 (428 aa).

ATP contacts are provided by residues Glu16, Arg56, and Asp124–Thr129.

It belongs to the Clp1 family. Clp1 subfamily.

The protein resides in the nucleus. Functionally, required for endonucleolytic cleavage during polyadenylation-dependent pre-mRNA 3'-end formation. The protein is Protein clpf-1 of Caenorhabditis elegans.